Reading from the N-terminus, the 479-residue chain is Ribulose bisphosphate carboxylase large chain (479 aa).

Residues 1 to 2 (MS) constitute a propeptide that is removed on maturation. Substrate contacts are provided by asparagine 123 and threonine 173. Lysine 175 serves as the catalytic Proton acceptor. Substrate is bound at residue lysine 177. 3 residues coordinate Mg(2+): lysine 201, aspartate 203, and glutamate 204. Lysine 201 bears the N6-carboxylysine mark. Serine 208 bears the Phosphoserine mark. Histidine 294 serves as the catalytic Proton acceptor. Substrate contacts are provided by arginine 295 and histidine 327. The residue at position 330 (threonine 330) is a Phosphothreonine. Serine 379 lines the substrate pocket.

Belongs to the RuBisCO large chain family. Type I subfamily. In terms of assembly, heterohexadecamer of 8 large chains and 8 small chains; disulfide-linked. The disulfide link is formed within the large subunit homodimers. The cofactor is Mg(2+). In terms of processing, the disulfide bond which can form in the large chain dimeric partners within the hexadecamer appears to be associated with oxidative stress and protein turnover.

The protein resides in the plastid. The protein localises to the chloroplast. It carries out the reaction 2 (2R)-3-phosphoglycerate + 2 H(+) = D-ribulose 1,5-bisphosphate + CO2 + H2O. The enzyme catalyses D-ribulose 1,5-bisphosphate + O2 = 2-phosphoglycolate + (2R)-3-phosphoglycerate + 2 H(+). Its function is as follows. RuBisCO catalyzes two reactions: the carboxylation of D-ribulose 1,5-bisphosphate, the primary event in carbon dioxide fixation, as well as the oxidative fragmentation of the pentose substrate in the photorespiration process. Both reactions occur simultaneously and in competition at the same active site. This is Ribulose bisphosphate carboxylase large chain from Olimarabidopsis pumila (Dwarf rocket).